Consider the following 1096-residue polypeptide: Lysine-specific demethylase PHF2 (1096 aa).

The segment at 5–56 adopts a PHD-type zinc-finger fold; it reads PVYCVCRLPYDVTRFMIECDACKDWFHGSCVGVEEEEAPDIDIYHCPNCEKT. 2-oxoglutarate-binding residues include Thr-193 and Thr-246. The JmjC domain occupies 197–353; that stretch reads FSDTRMSSFV…MQMRAYEVER (157 aa). His-249 and Asp-251 together coordinate Fe cation. 2-oxoglutarate is bound by residues Tyr-259, Lys-266, Tyr-321, and Thr-323. Tyr-321 is a Fe cation binding site. Disordered stretches follow at residues 447–634 and 646–674; these read KAVR…KDNK and GSKALRPPTSPGVFGALQNFKEDKPKPVR. At Ser-474 the chain carries Phosphoserine. Thr-479 carries the post-translational modification Phosphothreonine. Residues 503–518 are compositionally biased toward pro residues; the sequence is SKIPKPPKPPKPPRPP. The residue at position 539 (Ser-539) is a Phosphoserine. 2 stretches are compositionally biased toward basic and acidic residues: residues 548-563 and 578-624; these read LEAHTKEALTKMEPPK and DVVH…KLEK. Phosphoserine is present on Ser-655. The span at 665–674 shows a compositional bias: basic and acidic residues; sequence FKEDKPKPVR. Ser-681 and Ser-705 each carry phosphoserine. Lys-711 participates in a covalent cross-link: Glycyl lysine isopeptide (Lys-Gly) (interchain with G-Cter in SUMO2). 3 disordered regions span residues 719–799, 817–846, and 877–1078; these read TKPK…QGML, AGQAKGSSLAAHGARKNGGGSGKSAGKRLL, and YPSL…MATA. At Lys-720 the chain carries N6-acetyllysine. A Phosphotyrosine modification is found at Tyr-728. The segment covering 729-757 has biased composition (basic and acidic residues); the sequence is KSDDSSDEGSLHIDTDTKPGRNARVKKES. Phosphoserine is present on residues Ser-730, Ser-733, Ser-734, and Ser-738. Residues Ser-879, Ser-882, and Ser-899 each carry the phosphoserine modification. The segment covering 916–925 has biased composition (basic and acidic residues); sequence RQDRPVREGT. A compositionally biased stretch (basic residues) spans 949 to 959; sequence SKKKKSAKRKL. Composition is skewed to low complexity over residues 960-1009 and 1027-1040; these read TPNT…EGSS and TAAGTFTGAQAGRT. Positions 1053–1065 are enriched in polar residues; the sequence is RRPSASSPNNNTA. The residue at position 1056 (Ser-1056) is a Phosphoserine; by PKA.

Belongs to the JHDM1 histone demethylase family. JHDM1D subfamily. In terms of assembly, component of the PHF2-ARID5B complex, at least composed of PHF2 and ARID5B. Interacts with HNF4A and NR1H4. Interacts with RELA. In terms of processing, phosphorylated by PKA on specific serine residues, leading to the formation of an active lysine demethylase complex. In terms of tissue distribution, widely expressed, including in liver (at protein level).

The protein localises to the nucleus. It is found in the nucleolus. Its subcellular location is the chromosome. The protein resides in the centromere. It localises to the kinetochore. The catalysed reaction is N(6),N(6)-dimethyl-L-lysyl(9)-[histone H3] + 2-oxoglutarate + O2 = N(6)-methyl-L-lysyl(9)-[histone H3] + formaldehyde + succinate + CO2. With respect to regulation, enzymatically inactive by itself, and become active following phosphorylation by PKA. Its function is as follows. Lysine demethylase that demethylates both histones and non-histone proteins. Enzymatically inactive by itself, and becomes active following phosphorylation by PKA: forms a complex with ARID5B and mediates demethylation of methylated ARID5B. Demethylation of ARID5B leads to target the PHF2-ARID5B complex to target promoters, where PHF2 mediates demethylation of dimethylated 'Lys-9' of histone H3 (H3K9me2), followed by transcription activation of target genes. The PHF2-ARID5B complex acts as a coactivator of HNF4A in liver. PHF2 is recruited to trimethylated 'Lys-4' of histone H3 (H3K4me3) at rDNA promoters and promotes expression of rDNA. Involved in the activation of toll-like receptor 4 (TLR4)-target inflammatory genes in macrophages by catalyzing the demethylation of trimethylated histone H4 lysine 20 (H4K20me3) at the gene promoters. This Homo sapiens (Human) protein is Lysine-specific demethylase PHF2.